The primary structure comprises 276 residues: Putative olfactory receptor 10J6 (276 aa).

Residues 1–25 (MRRKNLTEVTEFVFLGFSRFHKHHI) lie on the Extracellular side of the membrane. N5 is a glycosylation site (N-linked (GlcNAc...) asparagine). The chain crosses the membrane as a helical span at residues 26 to 46 (TLFVVFLILYTLTVAGNAIIM). Topologically, residues 47–54 (TIICIDRH) are cytoplasmic. Residues 55–75 (LHTPMYFFLSMLASSKTVYTL) traverse the membrane as a helical segment. The Extracellular segment spans residues 76–99 (FIIPQMLSSFVTQTQPISLAGCTT). C97 and C188 are joined by a disulfide. Residues 100–120 (QTFFFVTLAINNCFLLTVMGY) traverse the membrane as a helical segment. The Cytoplasmic portion of the chain corresponds to 121–139 (DHYMAICNPLRYRVITSKK). The chain crosses the membrane as a helical span at residues 140-160 (VCVQLVCGAFSIGLAMAAVQV). At 161–196 (TSIFTLPFCHTVVGHFFCDILPVMKLSCINTTINEI) the chain is on the extracellular side. N-linked (GlcNAc...) asparagine glycosylation is present at N190. Residues 197-216 (INFVVRLFVILVPMGLVFIS) traverse the membrane as a helical segment. Topologically, residues 217–236 (YVLIISTVLKIASAEGWKKT) are cytoplasmic. The chain crosses the membrane as a helical span at residues 237 to 257 (FATCAFHLTVVIVHYGCASIA). Residues 258-270 (YLMPKSENSIEQD) lie on the Extracellular side of the membrane. A helical membrane pass occupies residues 271 to 276 (LLLSVT).

The protein belongs to the G-protein coupled receptor 1 family.

It is found in the cell membrane. Functionally, odorant receptor. In Homo sapiens (Human), this protein is Putative olfactory receptor 10J6 (OR10J6P).